Reading from the N-terminus, the 61-residue chain is Large ribosomal subunit protein uL30 (61 aa).

The protein belongs to the universal ribosomal protein uL30 family. Part of the 50S ribosomal subunit.

This chain is Large ribosomal subunit protein uL30, found in Oenococcus oeni (strain ATCC BAA-331 / PSU-1).